A 191-amino-acid polypeptide reads, in one-letter code: Adenylate kinase (191 aa).

12–17 (GSGKTT) contributes to the ATP binding site. Residues 34–63 (STGDLLRAESAKKTERGLLIEKFTSQGELV) are NMP. AMP-binding positions include T35, R40, 61–63 (ELV), 88–91 (GYPR), and Q95. The segment at 130 to 136 (GRSRGAD) is LID. Residue R131 participates in ATP binding. The AMP site is built by R133 and R145. Position 173 (R173) interacts with ATP.

This sequence belongs to the adenylate kinase family. In terms of assembly, monomer.

Its subcellular location is the cytoplasm. It catalyses the reaction AMP + ATP = 2 ADP. Its pathway is purine metabolism; AMP biosynthesis via salvage pathway; AMP from ADP: step 1/1. Functionally, catalyzes the reversible transfer of the terminal phosphate group between ATP and AMP. Plays an important role in cellular energy homeostasis and in adenine nucleotide metabolism. This Helicobacter pylori (strain HPAG1) protein is Adenylate kinase.